Consider the following 330-residue polypeptide: Methionyl-tRNA formyltransferase (330 aa).

112-115 (SLLP) is a (6S)-5,6,7,8-tetrahydrofolate binding site.

Belongs to the Fmt family.

It carries out the reaction L-methionyl-tRNA(fMet) + (6R)-10-formyltetrahydrofolate = N-formyl-L-methionyl-tRNA(fMet) + (6S)-5,6,7,8-tetrahydrofolate + H(+). In terms of biological role, attaches a formyl group to the free amino group of methionyl-tRNA(fMet). The formyl group appears to play a dual role in the initiator identity of N-formylmethionyl-tRNA by promoting its recognition by IF2 and preventing the misappropriation of this tRNA by the elongation apparatus. The sequence is that of Methionyl-tRNA formyltransferase from Alcanivorax borkumensis (strain ATCC 700651 / DSM 11573 / NCIMB 13689 / SK2).